Here is a 157-residue protein sequence, read N- to C-terminus: uncharacterized protein (157 aa).

The N-acetyltransferase domain maps to 9–147 (LLINYKTLDE…DFYVWHPEVN (139 aa)).

This is an uncharacterized protein from Bacillus cereus (strain 03BB102).